Here is a 398-residue protein sequence, read N- to C-terminus: 1-deoxy-D-xylulose 5-phosphate reductoisomerase (398 aa).

Positions 10, 11, 12, 13, 36, 37, 38, and 124 each coordinate NADPH. K125 lines the 1-deoxy-D-xylulose 5-phosphate pocket. Position 126 (E126) interacts with NADPH. D150 is a binding site for Mn(2+). Positions 151, 152, 186, and 209 each coordinate 1-deoxy-D-xylulose 5-phosphate. A Mn(2+)-binding site is contributed by E152. G215 contacts NADPH. The 1-deoxy-D-xylulose 5-phosphate site is built by S222, N227, K228, and E231. E231 contacts Mn(2+).

Belongs to the DXR family. In terms of assembly, homodimer. Mg(2+) is required as a cofactor. It depends on Mn(2+) as a cofactor.

It carries out the reaction 2-C-methyl-D-erythritol 4-phosphate + NADP(+) = 1-deoxy-D-xylulose 5-phosphate + NADPH + H(+). It functions in the pathway isoprenoid biosynthesis; isopentenyl diphosphate biosynthesis via DXP pathway; isopentenyl diphosphate from 1-deoxy-D-xylulose 5-phosphate: step 1/6. In terms of biological role, catalyzes the NADPH-dependent rearrangement and reduction of 1-deoxy-D-xylulose-5-phosphate (DXP) to 2-C-methyl-D-erythritol 4-phosphate (MEP). This Photorhabdus laumondii subsp. laumondii (strain DSM 15139 / CIP 105565 / TT01) (Photorhabdus luminescens subsp. laumondii) protein is 1-deoxy-D-xylulose 5-phosphate reductoisomerase.